Here is a 148-residue protein sequence, read N- to C-terminus: UPF0178 protein lpg0089 (148 aa).

It belongs to the UPF0178 family.

The polypeptide is UPF0178 protein lpg0089 (Legionella pneumophila subsp. pneumophila (strain Philadelphia 1 / ATCC 33152 / DSM 7513)).